Consider the following 510-residue polypeptide: Probable malate:quinone oxidoreductase (510 aa).

This sequence belongs to the MQO family. It depends on FAD as a cofactor.

The catalysed reaction is (S)-malate + a quinone = a quinol + oxaloacetate. Its pathway is carbohydrate metabolism; tricarboxylic acid cycle; oxaloacetate from (S)-malate (quinone route): step 1/1. This chain is Probable malate:quinone oxidoreductase, found in Wigglesworthia glossinidia brevipalpis.